The sequence spans 373 residues: AA9 family lytic polysaccharide monooxygenase A (373 aa).

An N-terminal signal peptide occupies residues 1 to 20 (MKSSTFGMLALAAAAKLVSA). His-21 lines the Cu(2+) pocket. Residues 36 to 55 (EGNSQSGYIRSPPSNSPITD) form a disordered region. Cys-63 and Cys-183 are joined by a disulfide. Position 102 (His-102) interacts with Cu(2+). O2 contacts are provided by His-169 and Gln-178. Residue Tyr-180 participates in Cu(2+) binding. Positions 234–333 (GASGSSSSSS…NSVPQPSSNA (100 aa)) are disordered. 2 stretches are compositionally biased toward low complexity: residues 235 to 262 (ASGS…APSS) and 270 to 323 (PATS…AAPT). A compositionally biased stretch (polar residues) spans 324–333 (NSVPQPSSNA). In terms of domain architecture, CBM1 spans 335 to 371 (GAVKEWYQCGGLNYSGSTQCEEGLTCKKWNPYYHQCV). Asn-347 carries N-linked (GlcNAc...) asparagine glycosylation.

The protein belongs to the polysaccharide monooxygenase AA9 family. Cu(2+) is required as a cofactor.

Its subcellular location is the secreted. It catalyses the reaction [(1-&gt;4)-beta-D-glucosyl]n+m + reduced acceptor + O2 = 4-dehydro-beta-D-glucosyl-[(1-&gt;4)-beta-D-glucosyl]n-1 + [(1-&gt;4)-beta-D-glucosyl]m + acceptor + H2O.. Lytic polysaccharide monooxygenase (LPMO) that depolymerizes crystalline and amorphous polysaccharides via the oxidation of scissile alpha- or beta-(1-4)-glycosidic bonds, yielding exclusively C4 oxidation products. Catalysis by LPMOs requires the reduction of the active-site copper from Cu(II) to Cu(I) by a reducing agent and H(2)O(2) or O(2) as a cosubstrate. In addition to cellulose, also cleaves the beta-(1!4)-glucan backbone of tamarind xyloglucan, but only next to unsubstituted glucosyl units. In Aspergillus tamarii, this protein is AA9 family lytic polysaccharide monooxygenase A.